The sequence spans 227 residues: MNRLLICQNITKHYQEGSLQTQVLKEVSFSMQEGELIAIVGSSGSGKSTLLHMLGGLDQPTSGEVFIHGQSLQRATQDELAKLRNQYLGFVYQFHHLMADFTALENVMMPMLISHKNKTEAKDRAENILSAVGLAKRILHKPSALSGGERQRVAIARSLVNNPKLVLADEPTGNLDHKTTESIFELIQKLNQEQKIAFLLVTHDLQLAEKLGRRLVMQDGILRESNS.

One can recognise an ABC transporter domain in the interval 5–227 (LICQNITKHY…QDGILRESNS (223 aa)). 41–48 (GSSGSGKS) contributes to the ATP binding site.

The protein belongs to the ABC transporter superfamily. Lipoprotein translocase (TC 3.A.1.125) family. In terms of assembly, the complex is composed of two ATP-binding proteins (LolD) and two transmembrane proteins (LolC and LolE).

It localises to the cell inner membrane. Functionally, part of the ABC transporter complex LolCDE involved in the translocation of mature outer membrane-directed lipoproteins, from the inner membrane to the periplasmic chaperone, LolA. Responsible for the formation of the LolA-lipoprotein complex in an ATP-dependent manner. The polypeptide is Lipoprotein-releasing system ATP-binding protein LolD (Histophilus somni (strain 129Pt) (Haemophilus somnus)).